The chain runs to 154 residues: Deoxyuridine 5'-triphosphate nucleotidohydrolase (154 aa).

Substrate contacts are provided by residues Arg-64–Gly-66, Asn-77, Thr-81–Asp-83, and Lys-91.

This sequence belongs to the dUTPase family. Homotrimer. Requires Mg(2+) as cofactor.

It catalyses the reaction dUTP + H2O = dUMP + diphosphate + H(+). The protein operates within pyrimidine metabolism; dUMP biosynthesis; dUMP from dCTP (dUTP route): step 2/2. Its function is as follows. This enzyme is involved in nucleotide metabolism: it produces dUMP, the immediate precursor of thymidine nucleotides and it decreases the intracellular concentration of dUTP so that uracil cannot be incorporated into DNA. The sequence is that of Deoxyuridine 5'-triphosphate nucleotidohydrolase from Mycolicibacterium gilvum (strain PYR-GCK) (Mycobacterium gilvum (strain PYR-GCK)).